The primary structure comprises 281 residues: Ribose-phosphate pyrophosphokinase (281 aa).

ATP is bound by residues 33–35 (DGE) and 90–91 (RQ). Histidine 123 and aspartate 161 together coordinate Mg(2+). Lysine 185 is an active-site residue. D-ribose 5-phosphate-binding residues include arginine 187 and aspartate 211.

The protein belongs to the ribose-phosphate pyrophosphokinase family. Class III (archaeal) subfamily. It depends on Mg(2+) as a cofactor.

The protein localises to the cytoplasm. The catalysed reaction is D-ribose 5-phosphate + ATP = 5-phospho-alpha-D-ribose 1-diphosphate + AMP + H(+). It functions in the pathway metabolic intermediate biosynthesis; 5-phospho-alpha-D-ribose 1-diphosphate biosynthesis; 5-phospho-alpha-D-ribose 1-diphosphate from D-ribose 5-phosphate (route I): step 1/1. Functionally, involved in the biosynthesis of the central metabolite phospho-alpha-D-ribosyl-1-pyrophosphate (PRPP) via the transfer of pyrophosphoryl group from ATP to 1-hydroxyl of ribose-5-phosphate (Rib-5-P). The protein is Ribose-phosphate pyrophosphokinase of Halobacterium salinarum (strain ATCC 29341 / DSM 671 / R1).